Here is a 165-residue protein sequence, read N- to C-terminus: Endoribonuclease YbeY (165 aa).

Zn(2+) contacts are provided by His-119, His-123, and His-129.

The protein belongs to the endoribonuclease YbeY family. The cofactor is Zn(2+).

It localises to the cytoplasm. Its function is as follows. Single strand-specific metallo-endoribonuclease involved in late-stage 70S ribosome quality control and in maturation of the 3' terminus of the 16S rRNA. In Streptomyces coelicolor (strain ATCC BAA-471 / A3(2) / M145), this protein is Endoribonuclease YbeY.